The sequence spans 123 residues: Ragulator complex protein LAMTOR3-B (123 aa).

It belongs to the LAMTOR3 family. In terms of assembly, part of the Ragulator complex composed of lamtor1, lamtor2, lamtor3, lamtor4 and lamtor5. The Ragulator complex interacts with slc38a9; the probable amino acid sensor. Component of the lysosomal folliculin complex (LFC).

Its subcellular location is the late endosome membrane. In terms of biological role, as part of the Ragulator complex it is involved in amino acid sensing and activation of mTORC1, a signaling complex promoting cell growth in response to growth factors, energy levels, and amino acids. Activated by amino acids through a mechanism involving the lysosomal V-ATPase, the Ragulator plays a dual role for the small GTPases Rag (RagA/RRAGA, RagB/RRAGB, RagC/RRAGC and/or RagD/RRAGD): it (1) acts as a guanine nucleotide exchange factor (GEF), activating the small GTPases Rag and (2) mediates recruitment of Rag GTPases to the lysosome membrane. Activated Ragulator and Rag GTPases function as a scaffold recruiting mTORC1 to lysosomes where it is in turn activated. This Xenopus laevis (African clawed frog) protein is Ragulator complex protein LAMTOR3-B (lamtor3-b).